Reading from the N-terminus, the 198-residue chain is Protein GrpE (198 aa).

A compositionally biased stretch (basic and acidic residues) spans 1–18 (MSEQEQKVEIPEVEKQEE). Residues 1–33 (MSEQEQKVEIPEVEKQEEVVVEETQQAEHSQEF) are disordered.

The protein belongs to the GrpE family. Homodimer.

The protein localises to the cytoplasm. In terms of biological role, participates actively in the response to hyperosmotic and heat shock by preventing the aggregation of stress-denatured proteins, in association with DnaK and GrpE. It is the nucleotide exchange factor for DnaK and may function as a thermosensor. Unfolded proteins bind initially to DnaJ; upon interaction with the DnaJ-bound protein, DnaK hydrolyzes its bound ATP, resulting in the formation of a stable complex. GrpE releases ADP from DnaK; ATP binding to DnaK triggers the release of the substrate protein, thus completing the reaction cycle. Several rounds of ATP-dependent interactions between DnaJ, DnaK and GrpE are required for fully efficient folding. This Haemophilus influenzae (strain ATCC 51907 / DSM 11121 / KW20 / Rd) protein is Protein GrpE.